Consider the following 229-residue polypeptide: Cell division topological specificity factor homolog, chloroplastic (229 aa).

The N-terminal 30 residues, 1–30 (MAMSSGTLRISATLVSPYHHHHRNRLSLPS), are a transit peptide targeting the chloroplast. The tract at residues 35–141 (VDFTGFISNG…KMILFSDRCD (107 aa)) is interaction with MIND1. The tract at residues 142 to 169 (VSDEAKRKIVNNIIHALSDFVEIESEEK) is homodimerization.

It belongs to the MinE family. Homodimer. Interacts with MIND1. These interactions are required for proper intraplastidic localization. Binds to ARC3. Expressed in green tissues, especially at the shoot apex. Also present in leaves, stems, buds, and flowers, especially in sepals, siliques (tip and base), and anthers (mostly in pollen grains).

Its subcellular location is the plastid. It is found in the chloroplast. Functionally, acts as a topological specificity factor during plastid division and specify plastid constriction sites (such as the Z-ring) in a MCD1-dependent manner. Especially involved in epidermal plastids division in a FTSZ1-dependent manner. Required for the proper formation of FtsZ rings at the division site in nongreen plastids (e.g. etioplasts). May contribute to gravitropism in stems and hypocotyls. Stimulates MIND1 ATPase activity. In cooperation with MIND1, prevents FtsZ ring formation anywhere outside of the mid-plastids. This chain is Cell division topological specificity factor homolog, chloroplastic, found in Arabidopsis thaliana (Mouse-ear cress).